The primary structure comprises 532 residues: 2,3-bisphosphoglycerate-independent phosphoglycerate mutase (532 aa).

Mn(2+)-binding residues include aspartate 15 and serine 65. Serine 65 acts as the Phosphoserine intermediate in catalysis. Substrate-binding positions include histidine 126, 156-157 (RD), arginine 188, arginine 194, 258-261 (RPDR), and lysine 331. Aspartate 398, histidine 402, aspartate 439, histidine 440, and histidine 457 together coordinate Mn(2+).

It belongs to the BPG-independent phosphoglycerate mutase family. In terms of assembly, monomer. Requires Mn(2+) as cofactor.

It catalyses the reaction (2R)-2-phosphoglycerate = (2R)-3-phosphoglycerate. It participates in carbohydrate degradation; glycolysis; pyruvate from D-glyceraldehyde 3-phosphate: step 3/5. In terms of biological role, catalyzes the interconversion of 2-phosphoglycerate and 3-phosphoglycerate. This is 2,3-bisphosphoglycerate-independent phosphoglycerate mutase from Nostoc punctiforme (strain ATCC 29133 / PCC 73102).